Consider the following 87-residue polypeptide: Small ribosomal subunit protein uS15c (87 aa).

Belongs to the universal ribosomal protein uS15 family. Part of the 30S ribosomal subunit.

It localises to the plastid. The protein resides in the chloroplast. The polypeptide is Small ribosomal subunit protein uS15c (rps15) (Illicium oligandrum (Star anise)).